The sequence spans 261 residues: Imidazole glycerol phosphate synthase subunit HisF (261 aa).

Catalysis depends on residues aspartate 16 and aspartate 135.

Belongs to the HisA/HisF family. Heterodimer of HisH and HisF.

The protein resides in the cytoplasm. The enzyme catalyses 5-[(5-phospho-1-deoxy-D-ribulos-1-ylimino)methylamino]-1-(5-phospho-beta-D-ribosyl)imidazole-4-carboxamide + L-glutamine = D-erythro-1-(imidazol-4-yl)glycerol 3-phosphate + 5-amino-1-(5-phospho-beta-D-ribosyl)imidazole-4-carboxamide + L-glutamate + H(+). It functions in the pathway amino-acid biosynthesis; L-histidine biosynthesis; L-histidine from 5-phospho-alpha-D-ribose 1-diphosphate: step 5/9. Its function is as follows. IGPS catalyzes the conversion of PRFAR and glutamine to IGP, AICAR and glutamate. The HisF subunit catalyzes the cyclization activity that produces IGP and AICAR from PRFAR using the ammonia provided by the HisH subunit. This is Imidazole glycerol phosphate synthase subunit HisF from Mycolicibacterium smegmatis (strain ATCC 700084 / mc(2)155) (Mycobacterium smegmatis).